A 358-amino-acid polypeptide reads, in one-letter code: Magnesium-protoporphyrin IX monomethyl ester [oxidative] cyclase (358 aa).

This sequence belongs to the AcsF family. Requires Fe cation as cofactor.

The enzyme catalyses Mg-protoporphyrin IX 13-monomethyl ester + 3 NADPH + 3 O2 + 2 H(+) = 3,8-divinyl protochlorophyllide a + 3 NADP(+) + 5 H2O. The protein operates within porphyrin-containing compound metabolism; chlorophyll biosynthesis (light-independent). In terms of biological role, catalyzes the formation of the isocyclic ring in chlorophyll biosynthesis. Mediates the cyclase reaction, which results in the formation of divinylprotochlorophyllide (Pchlide) characteristic of all chlorophylls from magnesium-protoporphyrin IX 13-monomethyl ester (MgPMME). The protein is Magnesium-protoporphyrin IX monomethyl ester [oxidative] cyclase of Trichodesmium erythraeum (strain IMS101).